The sequence spans 132 residues: Fatty acid-binding protein, intestinal (132 aa).

Position 2 is an N-acetylalanine (A2). W83 and R107 together coordinate hexadecanoate. 2 residues coordinate tetradecanoate: W83 and R107.

The protein belongs to the calycin superfamily. Fatty-acid binding protein (FABP) family.

The protein localises to the cytoplasm. Its function is as follows. FABPs are thought to play a role in the intracellular transport of long-chain fatty acids and their acyl-CoA esters. FABP2 is probably involved in triglyceride-rich lipoprotein synthesis. Binds saturated long-chain fatty acids with a high affinity, but binds with a lower affinity to unsaturated long-chain fatty acids. FABP2 may also help maintain energy homeostasis by functioning as a lipid sensor. The polypeptide is Fatty acid-binding protein, intestinal (FABP2) (Sus scrofa (Pig)).